The chain runs to 419 residues: Probable glycosidase C21B10.07 (419 aa).

Disordered regions lie at residues 1 to 20 and 29 to 67; these read MGIP…AALS and DPAR…NNEN. Basic and acidic residues predominate over residues 30–59; the sequence is PARKNESTNDVIDNHTDTEIDDHDNDHENL. A helical transmembrane segment spans residues 88–108; the sequence is FIWILIFIVALICSVLIGVLG. One can recognise a GH16 domain in the interval 122–387; it reads PSYKAKTYSL…WAGSSVYSSA (266 aa). The active-site Nucleophile is the Glu237. Glu242 acts as the Proton donor in catalysis.

It belongs to the glycosyl hydrolase 16 family.

Its subcellular location is the membrane. This is Probable glycosidase C21B10.07 from Schizosaccharomyces pombe (strain 972 / ATCC 24843) (Fission yeast).